Here is a 526-residue protein sequence, read N- to C-terminus: UDP-glycosyltransferase UGT5 (526 aa).

Residues 1 to 474 (MIFFYFLTLT…TAAVDMPWYQ (474 aa)) are Lumenal-facing. Asn-49, Asn-124, and Asn-283 each carry an N-linked (GlcNAc...) asparagine glycan. A helical transmembrane segment spans residues 475 to 495 (YLLLDVIAFLIFILVSVILII). Residues 496–526 (YYGVKISLRYLCALIFGNSSSLKPTKKVKDN) are Cytoplasmic-facing.

It belongs to the UDP-glycosyltransferase family.

The protein resides in the microsome membrane. In terms of biological role, catalyzes the transfer of a glycosyl group from a UDP-sugar to an acceptor molecule. This Dactylopius coccus (Cochineal) protein is UDP-glycosyltransferase UGT5.